Here is a 367-residue protein sequence, read N- to C-terminus: Mannan endo-1,4-beta-mannosidase (367 aa).

An N-terminal signal peptide occupies residues M1 to A17. Substrate contacts are provided by W79 and N176. Residue E177 is the Proton donor of the active site. A disulfide bridge links C192 with C259. W205, W240, and Y279 together coordinate substrate. Catalysis depends on E308, which acts as the Nucleophile. W337 serves as a coordination point for substrate.

Monomer. Post-translationally, the disulfide bond between Cys-192 and Cys-259 has not been observed in X-ray crystallography. This may be a consequence of the X-ray radiation.

The catalysed reaction is Random hydrolysis of (1-&gt;4)-beta-D-mannosidic linkages in mannans, galactomannans and glucomannans.. Its function is as follows. Hydrolyzes 1,4-beta linked polysaccharide backbones of mannans. Hydrolyzes mannohexaose (M6) preferentially to mannotriose (M4) and less preferentially to mannotetraose (M3), mannopentaose (M5), and mannobiose (M2); hydrolyzes M5 preferentially to M2, and M3, and less preferentially to mannotetraose M4; hydrolyzes M4 preferentially to M3, and less preferentially to mannose (M1), plus very little M2. Does not hydrolyze mannobiose or mannotriose. Does not hydrolyze xlyan, starch, cellulose or galactose. This Mytilus edulis (Blue mussel) protein is Mannan endo-1,4-beta-mannosidase.